The primary structure comprises 485 residues: Bifunctional protein HldE (485 aa).

The segment at 1–326 (MDFSSTRVLC…AELDESAISN (326 aa)) is ribokinase. Residue 195-198 (NVKE) participates in ATP binding. Asp271 is an active-site residue. The tract at residues 354–485 (FTNGCFDILH…GIVKKISTLT (132 aa)) is cytidylyltransferase.

The protein in the N-terminal section; belongs to the carbohydrate kinase PfkB family. In the C-terminal section; belongs to the cytidylyltransferase family. In terms of assembly, homodimer.

It carries out the reaction D-glycero-beta-D-manno-heptose 7-phosphate + ATP = D-glycero-beta-D-manno-heptose 1,7-bisphosphate + ADP + H(+). The catalysed reaction is D-glycero-beta-D-manno-heptose 1-phosphate + ATP + H(+) = ADP-D-glycero-beta-D-manno-heptose + diphosphate. It participates in nucleotide-sugar biosynthesis; ADP-L-glycero-beta-D-manno-heptose biosynthesis; ADP-L-glycero-beta-D-manno-heptose from D-glycero-beta-D-manno-heptose 7-phosphate: step 1/4. Its pathway is nucleotide-sugar biosynthesis; ADP-L-glycero-beta-D-manno-heptose biosynthesis; ADP-L-glycero-beta-D-manno-heptose from D-glycero-beta-D-manno-heptose 7-phosphate: step 3/4. Its function is as follows. Catalyzes the phosphorylation of D-glycero-D-manno-heptose 7-phosphate at the C-1 position to selectively form D-glycero-beta-D-manno-heptose-1,7-bisphosphate. Functionally, catalyzes the ADP transfer from ATP to D-glycero-beta-D-manno-heptose 1-phosphate, yielding ADP-D-glycero-beta-D-manno-heptose. The chain is Bifunctional protein HldE from Granulibacter bethesdensis (strain ATCC BAA-1260 / CGDNIH1).